The primary structure comprises 316 residues: MEKALHRISSMNAPLPDISLTDAAPGGRPLEWVGMQGIDLPVAVAEPGCRRDVHARADVQVDLPAPHVKGIHMSRLYRLLDGLGDGTALSPAGLQHVLHAMVDSHRDCDTRSARLRLRFDLLARRAALVTDGLAGWKAYPVRIDATLSGARFELRAQVTVVYSSTCPCSAALSRHWVEQAFLAAFGHDDRVEPAAVAAWLKRHATAATPHSQRSEAVVSVALPADGATLGLIDLIDRIEHALGTPVQTAVKRADEQAFAVLNGGNLMFVEDAARRVQAALDGHHANPRVHVRHLESLHPHDAVAWAAPVREGADAC.

Belongs to the GTP cyclohydrolase IV family.

It carries out the reaction GTP + H2O = 7,8-dihydroneopterin 3'-triphosphate + formate + H(+). It participates in cofactor biosynthesis; 7,8-dihydroneopterin triphosphate biosynthesis; 7,8-dihydroneopterin triphosphate from GTP: step 1/1. Functionally, converts GTP to 7,8-dihydroneopterin triphosphate. The sequence is that of GTP cyclohydrolase FolE2 1 from Burkholderia lata (strain ATCC 17760 / DSM 23089 / LMG 22485 / NCIMB 9086 / R18194 / 383).